The following is a 314-amino-acid chain: 3'-5' exoribonuclease YhaM (314 aa).

One can recognise an HD domain in the interval 163–279 (HVVSMLDLAK…LHYIDNLDAK (117 aa)).

Belongs to the YhaM family.

In terms of biological role, shows a 3'-5' exoribonuclease activity. This chain is 3'-5' exoribonuclease YhaM, found in Bacillus cereus (strain G9842).